The following is a 1106-amino-acid chain: MKIYKKNHFLKILIIFIYLSCNILKVNADGTFSTIQPSTDIKFDKSNLEFVAEWDVSANSISNVVGSTDSSEFSLNYGVWGPTYNYLIAKNKSPSIKANVDYTFSFDFKLGKALGEYNNYQSMVLSFYIPEDIAYFPWEIRTPLYTTNEFSGNFASTSYQSKILTFRSTVDIGNSIMVLRINRATETGPTASSVYFRNMKITIPSKPITTPTDLLTKDSELIVIPKPPISLDLQDLTKCPYLTASDLYNWHDPTIWPNGVVPSPNQNITIPAGKRVLISASSISQTQIYSRIVVPVNSELIFNDQNFTMNIRDIYVQGKFIMGTSLCRYNSFINIIFHGEKTLQDTIAQFYGSKGIAVASGGFISVQGKQYHNTWSKLASNVWSGDRVIWIQDNVNWEVGQQVLITTSVYKDELDNQNEILTIKAIEGKKIEFTEPIKWFKYGSQEYQSEVALLSRRIVFSSDESSSVSTSFGGHILSSGEMQFAGVQLKRMGQKNVKARYPLHYHLGGTLNNSFISDCSVTNSYYRCYTIHGTNNVTLTRNVAYDAFGHCYYLEDGVEVDNRISFNLGAYVHTIGKPAAGASQIGETFYQSSELTQPADSAASCFYITNSWNSFIGNAASGGWAGFAFPNLPKPIGNHRTLNIIPMQYPIKEWQGNTAHSSGYYFEDGASIYVGGNLTFNEANGMLIYNSGRLGRTTYVNGVKNENNVVFDRLNNTKIFLSNLGVGYWGENIEIVGYESHDNTRPVSLFGNVWLHNALVNGQSGNILTKNSETTRQGFRFYDFYVQTIISNTIFRNFIHSTAATKRDEDNVVITATTFSDVFKPQFISATKNITFQNVPQSQIIGHEDVANSGSSRLFNFLDGDGSVTSSFTGKPGIPQIVGSHVSWWKFDDSCLFSTEWNVWVCNKGTKGLANIEFWVPGFMERELEQDPDSYIGSISLFGSGINDERKTLLTRNPGITGVSNMGWYAYFTIGTPNYLRIWTAQIAFGEYIFLAIPYPTGTTFTITSEYDYSNQYTYTITKTTSALAVKQGNGKQYYFDGTHLFLKLVNFMNTGGSWESFDRVGIKIPDVYWTYIYNIRATNTAKPSVNGYFLNLPDVRPSSTL.

The N-terminal stretch at 1–28 is a signal peptide; the sequence is MKIYKKNHFLKILIIFIYLSCNILKVNA. Positions 254–380 constitute a G8 domain; sequence TIWPNGVVPS…YHNTWSKLAS (127 aa). N-linked (GlcNAc...) asparagine glycans are attached at residues N267, N306, N512, N536, N677, N715, and N833.

This sequence belongs to the comF family.

The protein localises to the secreted. The chain is Communication mutant protein F (comF-1) from Dictyostelium discoideum (Social amoeba).